Consider the following 1921-residue polypeptide: Mediator of RNA polymerase II transcription subunit 13 (1921 aa).

Glycyl lysine isopeptide (Lys-Gly) (interchain with G-Cter in ubiquitin) cross-links involve residues Lys220 and Lys226. 3 disordered regions span residues 400-434 (YEKN…TSRT), 702-724 (TQVE…NSST), and 1485-1528 (SPTF…GDVS). Residues 407 to 427 (SSGSSRNSSISSTSSASSGSG) show a composition bias toward low complexity. Polar residues-rich tracts occupy residues 1486-1496 (PTFTSLGSESS) and 1515-1527 (EGIT…QGDV).

The protein belongs to the Mediator complex subunit 13 family. Component of the Mediator complex. Interacts with CYCC1-2 (CDK8 homolog). In terms of tissue distribution, ubiquitous. Highest expression in the shoot apex.

The protein localises to the nucleus. Functionally, component of the Mediator complex, a coactivator involved in the regulated transcription of nearly all RNA polymerase II-dependent genes. Mediator functions as a bridge to convey information from gene-specific regulatory proteins to the basal RNA polymerase II transcription machinery. The Mediator complex, having a compact conformation in its free form, is recruited to promoters by direct interactions with regulatory proteins and serves for the assembly of a functional preinitiation complex with RNA polymerase II and the general transcription factors. Acts closely together with MAB12. Involved in the regulation of embryo patterning and cotyledon organogenesis. May act through transient repression of specific genes such as the ones responsive to auxin. In Arabidopsis thaliana (Mouse-ear cress), this protein is Mediator of RNA polymerase II transcription subunit 13 (MED13).